The primary structure comprises 155 residues: Putative pre-16S rRNA nuclease (155 aa).

It belongs to the YqgF nuclease family.

The protein localises to the cytoplasm. Could be a nuclease involved in processing of the 5'-end of pre-16S rRNA. The protein is Putative pre-16S rRNA nuclease of Xylella fastidiosa (strain M12).